The primary structure comprises 375 residues: 23S rRNA (uracil(747)-C(5))-methyltransferase RlmC (375 aa).

[4Fe-4S] cluster-binding residues include C3, C11, C14, and C87. S-adenosyl-L-methionine is bound by residues Q212, F241, E262, and N307. C334 functions as the Nucleophile in the catalytic mechanism.

Belongs to the class I-like SAM-binding methyltransferase superfamily. RNA M5U methyltransferase family. RlmC subfamily.

It catalyses the reaction uridine(747) in 23S rRNA + S-adenosyl-L-methionine = 5-methyluridine(747) in 23S rRNA + S-adenosyl-L-homocysteine + H(+). Functionally, catalyzes the formation of 5-methyl-uridine at position 747 (m5U747) in 23S rRNA. The protein is 23S rRNA (uracil(747)-C(5))-methyltransferase RlmC of Pectobacterium atrosepticum (strain SCRI 1043 / ATCC BAA-672) (Erwinia carotovora subsp. atroseptica).